A 138-amino-acid polypeptide reads, in one-letter code: MAKPIPRIGSRKNGRIGSRKSGRRIPKGVIHVQASFNNTIVTVTDVRGRVVSWSSAGTCGFRGTRRGTPFAAQTAAGNAIRTVMDQGMQRAEVMIKGPGLGRDAALRAIRRSGLLLSFVRDVTPMPHNGCRPPKKRRV.

Residues 1-23 form a disordered region; it reads MAKPIPRIGSRKNGRIGSRKSGR. Over residues 9-23 the composition is skewed to basic residues; the sequence is GSRKNGRIGSRKSGR.

This sequence belongs to the universal ribosomal protein uS11 family. As to quaternary structure, part of the 30S ribosomal subunit.

The protein resides in the plastid. It is found in the chloroplast. The sequence is that of Small ribosomal subunit protein uS11c from Buxus microphylla (Littleleaf boxwood).